The sequence spans 613 residues: Dihydroxy-acid dehydratase (613 aa).

Mg(2+) is bound at residue D81. C122 contacts [2Fe-2S] cluster. Residues D123 and K124 each coordinate Mg(2+). K124 is modified (N6-carboxylysine). C193 serves as a coordination point for [2Fe-2S] cluster. Mg(2+) is bound at residue E489. Residue S515 is the Proton acceptor of the active site.

This sequence belongs to the IlvD/Edd family. As to quaternary structure, homodimer. It depends on [2Fe-2S] cluster as a cofactor. Mg(2+) is required as a cofactor.

It catalyses the reaction (2R)-2,3-dihydroxy-3-methylbutanoate = 3-methyl-2-oxobutanoate + H2O. It carries out the reaction (2R,3R)-2,3-dihydroxy-3-methylpentanoate = (S)-3-methyl-2-oxopentanoate + H2O. It participates in amino-acid biosynthesis; L-isoleucine biosynthesis; L-isoleucine from 2-oxobutanoate: step 3/4. It functions in the pathway amino-acid biosynthesis; L-valine biosynthesis; L-valine from pyruvate: step 3/4. Its function is as follows. Functions in the biosynthesis of branched-chain amino acids. Catalyzes the dehydration of (2R,3R)-2,3-dihydroxy-3-methylpentanoate (2,3-dihydroxy-3-methylvalerate) into 2-oxo-3-methylpentanoate (2-oxo-3-methylvalerate) and of (2R)-2,3-dihydroxy-3-methylbutanoate (2,3-dihydroxyisovalerate) into 2-oxo-3-methylbutanoate (2-oxoisovalerate), the penultimate precursor to L-isoleucine and L-valine, respectively. The sequence is that of Dihydroxy-acid dehydratase from Pseudomonas putida (strain GB-1).